A 73-amino-acid polypeptide reads, in one-letter code: Guanine nucleotide-binding protein G(I)/G(S)/G(O) subunit gamma-11 (73 aa).

Positions 54–73 are disordered; that stretch reads VKGIPEDKNPFKEKGSCIIS. At cysteine 70 the chain carries Cysteine methyl ester. A lipid anchor (S-farnesyl cysteine) is attached at cysteine 70. Residues 71-73 constitute a propeptide, removed in mature form; the sequence is IIS.

This sequence belongs to the G protein gamma family. As to quaternary structure, g proteins are composed of 3 units, alpha, beta and gamma. Interacts with beta-1 and beta-3, but not with beta-2.

The protein resides in the cell membrane. In terms of biological role, guanine nucleotide-binding proteins (G proteins) are involved as a modulator or transducer in various transmembrane signaling systems. The beta and gamma chains are required for the GTPase activity, for replacement of GDP by GTP, and for G protein-effector interaction. This chain is Guanine nucleotide-binding protein G(I)/G(S)/G(O) subunit gamma-11 (GNG11), found in Bos taurus (Bovine).